The following is a 239-amino-acid chain: Claudin-14 (239 aa).

The Cytoplasmic segment spans residues 1–7 (MASTAVQ). A helical membrane pass occupies residues 8–28 (LLGFLLSFLGMVGTLITTILP). Residues 29–81 (HWRRTAHVGTNILTAVSYLKGLWMECVWHSTGIYQCQIYRSLLALPRDLQAAR) are Extracellular-facing. A helical membrane pass occupies residues 82–102 (ALMVISCLLSGMACACAVVGM). Residues 103–115 (KCTRCAKGTPAKT) lie on the Cytoplasmic side of the membrane. A helical membrane pass occupies residues 116–136 (TFAVLGGALFLLAGLLCMVAV). Over 137–162 (SWTTNDVVQNFYNPLLPSGMKFEIGQ) the chain is Extracellular. Residues 163–183 (ALYLGFISSSLSLIGGTLLCL) form a helical membrane-spanning segment. Residues 184 to 239 (SCQDEAPYRPYPPQSRAGATTTATAPAYRPPAAYKDNRAPSVTSAAHSGYRLNDYV) lie on the Cytoplasmic side of the membrane.

It belongs to the claudin family. In terms of tissue distribution, expressed in all sensory epithelia of the inner ear vestibular organs, as well as in liver and kidney.

The protein localises to the cell junction. It is found in the tight junction. The protein resides in the cell membrane. Its function is as follows. Plays a major role in tight junction-specific obliteration of the intercellular space, through calcium-independent cell-adhesion activity. The polypeptide is Claudin-14 (Cldn14) (Mus musculus (Mouse)).